The primary structure comprises 177 residues: Putative pre-16S rRNA nuclease (177 aa).

Residues 1–20 (MVATQQGPDRPGIDDPGRGR) are disordered.

It belongs to the YqgF nuclease family.

It localises to the cytoplasm. Functionally, could be a nuclease involved in processing of the 5'-end of pre-16S rRNA. This Rhodococcus erythropolis (strain PR4 / NBRC 100887) protein is Putative pre-16S rRNA nuclease.